We begin with the raw amino-acid sequence, 20 residues long: Alanine aminotransferase 1 (20 aa).

Lys11 is subject to N6-(pyridoxal phosphate)lysine. Lys11 carries N-linked (Glc) (glycation) lysine; in vitro glycosylation.

Belongs to the class-I pyridoxal-phosphate-dependent aminotransferase family. Alanine aminotransferase subfamily. As to quaternary structure, homodimer. Requires pyridoxal 5'-phosphate as cofactor. In terms of processing, glycation of Lys-11 inactivates the enzyme.

The protein resides in the cytoplasm. The catalysed reaction is L-alanine + 2-oxoglutarate = pyruvate + L-glutamate. Its pathway is amino-acid degradation; L-alanine degradation via transaminase pathway; pyruvate from L-alanine: step 1/1. Functionally, catalyzes the reversible transamination between alanine and 2-oxoglutarate to form pyruvate and glutamate. Participates in cellular nitrogen metabolism and also in liver gluconeogenesis starting with precursors transported from skeletal muscles. In Sus scrofa (Pig), this protein is Alanine aminotransferase 1 (GPT).